Consider the following 579-residue polypeptide: Zinc finger protein 384 (579 aa).

The segment at 171–198 is disordered; it reads TLTEEGGGGGGGGGTVAPPKPPRGRKKK. A compositionally biased stretch (gly residues) spans 175-185; it reads EGGGGGGGGGT. C2H2-type zinc fingers lie at residues 229–251, 257–279, 285–307, 318–340, 346–368, 374–398, 404–426, and 434–456; these read YRCR…SKSH, HKCP…IRIH, YSCN…TRIH, HKCP…LRIH, YNCS…TRIH, YKCA…RRQH, FKCH…LSTH, and YTCT…MRKH. A compositionally biased stretch (low complexity) spans 500–513; the sequence is QAQASQASQQQQQQ. The segment at 500 to 553 is disordered; it reads QAQASQASQQQQQQQPPPPQPPHFQSPGAAPQGGGGGDSNQNPPPQCSFDLTPY. Positions 514–523 are enriched in pro residues; that stretch reads QPPPPQPPHF.

It belongs to the krueppel C2H2-type zinc-finger protein family. As to quaternary structure, interacts with BCAR1. In terms of tissue distribution, expressed in osteocytes, osteoblasts, and chondrocytes in bone.

The protein localises to the nucleus. Its function is as follows. Transcription factor that binds the consensus DNA sequence [GC]AAAAA. Seems to bind and regulate the promoters of MMP1, MMP3, MMP7 and COL1A1. This Rattus norvegicus (Rat) protein is Zinc finger protein 384 (Znf384).